Here is a 534-residue protein sequence, read N- to C-terminus: Phosphoenolpyruvate carboxykinase (ATP) (534 aa).

Substrate-binding residues include Arg59, Tyr200, and Lys206. ATP is bound by residues Lys206, His225, and 242–250 (GLSGTGKTT). Mn(2+) is bound by residues Lys206 and His225. Asp263 contacts Mn(2+). ATP contacts are provided by residues Glu291, Arg327, 443–444 (RI), and Thr449. Arg327 lines the substrate pocket.

The protein belongs to the phosphoenolpyruvate carboxykinase (ATP) family. It depends on Mn(2+) as a cofactor.

The protein resides in the cytoplasm. It carries out the reaction oxaloacetate + ATP = phosphoenolpyruvate + ADP + CO2. It participates in carbohydrate biosynthesis; gluconeogenesis. Functionally, involved in the gluconeogenesis. Catalyzes the conversion of oxaloacetate (OAA) to phosphoenolpyruvate (PEP) through direct phosphoryl transfer between the nucleoside triphosphate and OAA. The sequence is that of Phosphoenolpyruvate carboxykinase (ATP) from Lachnospira eligens (strain ATCC 27750 / DSM 3376 / VPI C15-48 / C15-B4) (Eubacterium eligens).